We begin with the raw amino-acid sequence, 285 residues long: Acetyl-coenzyme A carboxylase carboxyl transferase subunit beta 2 (285 aa).

A disordered region spans residues Met1 to Lys20. The CoA carboxyltransferase N-terminal domain maps to Leu26–Val285. 4 residues coordinate Zn(2+): Cys30, Cys33, Cys49, and Cys52. The segment at Cys30–Cys52 adopts a C4-type zinc-finger fold.

It belongs to the AccD/PCCB family. In terms of assembly, acetyl-CoA carboxylase is a heterohexamer composed of biotin carboxyl carrier protein (AccB), biotin carboxylase (AccC) and two subunits each of ACCase subunit alpha (AccA) and ACCase subunit beta (AccD). It depends on Zn(2+) as a cofactor.

Its subcellular location is the cytoplasm. It carries out the reaction N(6)-carboxybiotinyl-L-lysyl-[protein] + acetyl-CoA = N(6)-biotinyl-L-lysyl-[protein] + malonyl-CoA. It functions in the pathway lipid metabolism; malonyl-CoA biosynthesis; malonyl-CoA from acetyl-CoA: step 1/1. Its function is as follows. Component of the acetyl coenzyme A carboxylase (ACC) complex. Biotin carboxylase (BC) catalyzes the carboxylation of biotin on its carrier protein (BCCP) and then the CO(2) group is transferred by the transcarboxylase to acetyl-CoA to form malonyl-CoA. This is Acetyl-coenzyme A carboxylase carboxyl transferase subunit beta 2 from Lysinibacillus sphaericus (strain C3-41).